Reading from the N-terminus, the 249-residue chain is Chromosome-partitioning ATPase Soj (249 aa).

ATP contacts are provided by K15, G16, G17, V18, G19, K20, T21, T22, P207, and N209. G17 contacts ADP. G19, K20, T21, T22, P207, and N209 together coordinate ADP. T21 contacts Mg(2+).

This sequence belongs to the ParA family. Monomer in the absence of nucleotides or presence of ADP, in the presence of ATP is found in a monomer-dimer equilibrium. ATP-binding is required for DNA-binding. Probably interacts with Spo0J.

It carries out the reaction ATP + H2O = ADP + phosphate + H(+). ATPase activity is stimulated 10-fold in the presence of Spo0J and parS DNA (a plasmid centromere-like site or plasmid DNA itself). The first 20 residues of Spo0J stimulate its ATPase activity by 8%. Its function is as follows. ATPase probably involved in chromosome partitioning. Cooperatively binds dsDNA, forming nucleoprotein filaments in a strictly ATP-dependent fashion. Can also bind ssDNA with lower affinity. This is Chromosome-partitioning ATPase Soj from Thermus thermophilus (strain ATCC BAA-163 / DSM 7039 / HB27).